We begin with the raw amino-acid sequence, 362 residues long: Cobalt-precorrin-5B C(1)-methyltransferase (362 aa).

This sequence belongs to the CbiD family.

It carries out the reaction Co-precorrin-5B + S-adenosyl-L-methionine = Co-precorrin-6A + S-adenosyl-L-homocysteine. It functions in the pathway cofactor biosynthesis; adenosylcobalamin biosynthesis; cob(II)yrinate a,c-diamide from sirohydrochlorin (anaerobic route): step 6/10. Its function is as follows. Catalyzes the methylation of C-1 in cobalt-precorrin-5B to form cobalt-precorrin-6A. In Burkholderia cenocepacia (strain ATCC BAA-245 / DSM 16553 / LMG 16656 / NCTC 13227 / J2315 / CF5610) (Burkholderia cepacia (strain J2315)), this protein is Cobalt-precorrin-5B C(1)-methyltransferase.